A 207-amino-acid chain; its full sequence is MNRGDLRLVVGLGNPGNRYANTRHNVGFMALERLASREGGGFRSMPKLQGQLADLGSGDKRLRLLMPQTFMNDSGRSIRAALDWFGFELHQLLVLVDDMDLPLGRLRLRARGSAGGHNGLKSTIQHLGTQDFARLRIGIGAPGQNPSERKARTVSHVLGSFSRDEEPLLDKVLLEVVDGLERIQLQGLDLAGNHLNGLQLAPTSTEE.

TRNA is bound at residue Tyr19. Residue His24 is the Proton acceptor of the active site. TRNA-binding residues include Phe70, Asn72, and Asn118.

Belongs to the PTH family. Monomer.

It localises to the cytoplasm. It catalyses the reaction an N-acyl-L-alpha-aminoacyl-tRNA + H2O = an N-acyl-L-amino acid + a tRNA + H(+). Functionally, hydrolyzes ribosome-free peptidyl-tRNAs (with 1 or more amino acids incorporated), which drop off the ribosome during protein synthesis, or as a result of ribosome stalling. In terms of biological role, catalyzes the release of premature peptidyl moieties from peptidyl-tRNA molecules trapped in stalled 50S ribosomal subunits, and thus maintains levels of free tRNAs and 50S ribosomes. This chain is Peptidyl-tRNA hydrolase, found in Synechococcus sp. (strain CC9311).